A 218-amino-acid chain; its full sequence is MTDTMAETMKQTVASILKSIERYNPANLEILERYVEMQSRENTYDWGANLAVLKLYQFNPEKFNADITCQILLKALTNFPHTDFTLCKCLLLESVVENETISQIKYLADILEQCDFAQFGNRVHQMPELCSRISGFHDSIRKFVCHVVGITFQTIDKNNLANLLGGIDDVTLKHWVKKYGWRDDGSLIFIANQDENIKTKNITEKIEFDHLAPLMALL.

Residues 44-205 (YDWGANLAVL…NIKTKNITEK (162 aa)) enclose the PCI domain.

Belongs to the eIF-3 subunit K family. As to quaternary structure, component of the eukaryotic translation initiation factor 3 (eIF-3) complex.

Its subcellular location is the cytoplasm. In terms of biological role, component of the eukaryotic translation initiation factor 3 (eIF-3) complex, which is involved in protein synthesis of a specialized repertoire of mRNAs and, together with other initiation factors, stimulates binding of mRNA and methionyl-tRNAi to the 40S ribosome. The eIF-3 complex specifically targets and initiates translation of a subset of mRNAs involved in cell proliferation. In Bombyx mori (Silk moth), this protein is Eukaryotic translation initiation factor 3 subunit K.